A 649-amino-acid chain; its full sequence is Archaeal Lon protease (649 aa).

Topologically, residues 1–114 (MFSIKFKTTE…KLDFKAPSST (114 aa)) are cytoplasmic. Position 47-54 (47-54 (GDPGVGKS)) interacts with ATP. The helical transmembrane segment at 115 to 135 (TLLLIMIGAILLSEYLLKYLP) threads the bilayer. The Extracellular portion of the chain corresponds to 136–138 (QNY). The chain crosses the membrane as a helical span at residues 139–159 (LLAAVTITALIVLIFGFVIIL). The Cytoplasmic portion of the chain corresponds to 160-649 (TSIMGASRAS…DNRGGAERFN (490 aa)). In terms of domain architecture, Lon proteolytic spans 456–639 (EPKVGVIYGL…DEIVPLVFDL (184 aa)). Catalysis depends on residues serine 550 and lysine 593.

The protein belongs to the peptidase S16 family. Archaeal LonB subfamily. In terms of assembly, homohexamer. Organized in a ring with a central cavity.

The protein localises to the cell membrane. ATP-dependent serine protease that mediates the selective degradation of mutant and abnormal proteins as well as certain short-lived regulatory proteins. Degrades polypeptides processively. The sequence is that of Archaeal Lon protease from Methanocaldococcus jannaschii (strain ATCC 43067 / DSM 2661 / JAL-1 / JCM 10045 / NBRC 100440) (Methanococcus jannaschii).